Consider the following 301-residue polypeptide: Ribosomal RNA large subunit methyltransferase F (301 aa).

This sequence belongs to the methyltransferase superfamily. METTL16/RlmF family.

The protein localises to the cytoplasm. It carries out the reaction adenosine(1618) in 23S rRNA + S-adenosyl-L-methionine = N(6)-methyladenosine(1618) in 23S rRNA + S-adenosyl-L-homocysteine + H(+). Its function is as follows. Specifically methylates the adenine in position 1618 of 23S rRNA. This Colwellia psychrerythraea (strain 34H / ATCC BAA-681) (Vibrio psychroerythus) protein is Ribosomal RNA large subunit methyltransferase F.